Here is a 625-residue protein sequence, read N- to C-terminus: Archaeosine synthase subunit alpha (625 aa).

The 69-residue stretch at Lys556 to Lys624 folds into the PUA domain.

The protein belongs to the archaeosine synthase type 1 family. Forms a robust complex with the archaeosine synthase beta subunit RaSEA. Formation of this complex highly increases lysine transfer activity. The complex likely consists of an alpha(2)beta(2) heterotetrameric structure.

The catalysed reaction is 7-cyano-7-carbaguanosine(15) in tRNA + L-lysine = 7-N-[(5S)-5-amino-5-carboxypentyl]formamidino-7-deazaguanosine(15) in tRNA. It functions in the pathway tRNA modification; archaeosine-tRNA biosynthesis. Functions in the biosynthesis of archaeosine, a modified nucleoside present in the dihydrouridine loop (D-loop) of archaeal tRNAs. Catalyzes the addition of L-lysine to the cyano group of 7-cyano-7-deazaguanine (preQ0)-modified tRNAs at position 15, to generate q0kN15-tRNA, a q0N lysine adduct identified as 7-N-[(5S)-5-amino-5-carboxypentyl]formamidino-7-deazaguanosine. This Methanosarcina acetivorans (strain ATCC 35395 / DSM 2834 / JCM 12185 / C2A) protein is Archaeosine synthase subunit alpha.